The chain runs to 180 residues: MSRIGKKIVLLPTNISTQFDGQTITVNGPKGTLLRTLPEGITLEINDGTILVQTSGNSKRANQLHGLSRTLISNMIEGVSTGFSKKLQIQGVGYRSQIDNNNLILSVGYSHVVTIQPPQNIEIKVENNTSITVLGIDKEVVGQVASSIRSIRPPEPYKGKGIRYQGEVVRTKAGKAGKGK.

This sequence belongs to the universal ribosomal protein uL6 family. As to quaternary structure, part of the 50S ribosomal subunit.

The protein resides in the plastid. It is found in the chloroplast. Functionally, binds 23S rRNA. The chain is Large ribosomal subunit protein uL6c (rpl6) from Porphyra purpurea (Red seaweed).